The primary structure comprises 222 residues: Putative N-acetylmannosamine-6-phosphate 2-epimerase (222 aa).

The protein belongs to the NanE family.

It catalyses the reaction an N-acyl-D-glucosamine 6-phosphate = an N-acyl-D-mannosamine 6-phosphate. The protein operates within amino-sugar metabolism; N-acetylneuraminate degradation; D-fructose 6-phosphate from N-acetylneuraminate: step 3/5. Its function is as follows. Converts N-acetylmannosamine-6-phosphate (ManNAc-6-P) to N-acetylglucosamine-6-phosphate (GlcNAc-6-P). This is Putative N-acetylmannosamine-6-phosphate 2-epimerase from Staphylococcus aureus (strain Mu3 / ATCC 700698).